The sequence spans 171 residues: Shikimate kinase (171 aa).

14 to 19 serves as a coordination point for ATP; sequence GAGKST. Ser-18 serves as a coordination point for Mg(2+). Residues Asp-36, Arg-60, and Gly-82 each contribute to the substrate site. Arg-120 lines the ATP pocket. Position 139 (Arg-139) interacts with substrate. Gln-156 contributes to the ATP binding site.

Belongs to the shikimate kinase family. As to quaternary structure, monomer. Mg(2+) is required as a cofactor.

The protein resides in the cytoplasm. The catalysed reaction is shikimate + ATP = 3-phosphoshikimate + ADP + H(+). The protein operates within metabolic intermediate biosynthesis; chorismate biosynthesis; chorismate from D-erythrose 4-phosphate and phosphoenolpyruvate: step 5/7. Catalyzes the specific phosphorylation of the 3-hydroxyl group of shikimic acid using ATP as a cosubstrate. The chain is Shikimate kinase from Shewanella putrefaciens (strain CN-32 / ATCC BAA-453).